We begin with the raw amino-acid sequence, 101 residues long: UPF0235 protein Cphamn1_2066 (101 aa).

It belongs to the UPF0235 family.

The chain is UPF0235 protein Cphamn1_2066 from Chlorobium phaeobacteroides (strain BS1).